We begin with the raw amino-acid sequence, 271 residues long: MTPLSSADTLTLHGQTFASRVLLGTSRYPSLQSLSDSIAAARPGMVTVALRRQMNAGAAEAGFFELLKRHDVPLLPNTAGCQTIAEAVTTAQMAREVFETDWIKLELIGDDYTLQPDPVGLIEAATLLVKDGFKVLPYCTEDLVIARRLLDAGCEALMPWGAPIGTGKGIVNPYGLRVLRERLPDVPLIVDAGLGVPSHACQVMEWGFDGVLLNTAVSQATHPEIMARAFARGVEAGRAAYLAGPMDARESAHASTPVVGMPFWHQDGSHA.

The active-site Schiff-base intermediate with DXP is lysine 104. 1-deoxy-D-xylulose 5-phosphate-binding positions include glycine 165, 192–193 (AG), and 214–215 (NT).

The protein belongs to the ThiG family. Homotetramer. Forms heterodimers with either ThiH or ThiS.

It is found in the cytoplasm. It carries out the reaction [ThiS sulfur-carrier protein]-C-terminal-Gly-aminoethanethioate + 2-iminoacetate + 1-deoxy-D-xylulose 5-phosphate = [ThiS sulfur-carrier protein]-C-terminal Gly-Gly + 2-[(2R,5Z)-2-carboxy-4-methylthiazol-5(2H)-ylidene]ethyl phosphate + 2 H2O + H(+). Its pathway is cofactor biosynthesis; thiamine diphosphate biosynthesis. Its function is as follows. Catalyzes the rearrangement of 1-deoxy-D-xylulose 5-phosphate (DXP) to produce the thiazole phosphate moiety of thiamine. Sulfur is provided by the thiocarboxylate moiety of the carrier protein ThiS. In vitro, sulfur can be provided by H(2)S. This Burkholderia mallei (strain ATCC 23344) protein is Thiazole synthase.